The chain runs to 689 residues: Elongation factor G (689 aa).

A tr-type G domain is found at 8–282 (DKVRNIGIMA…AIVRYLPSPL (275 aa)). GTP contacts are provided by residues 17 to 24 (AHIDAGKT), 81 to 85 (DTPGH), and 135 to 138 (NKMD).

Belongs to the TRAFAC class translation factor GTPase superfamily. Classic translation factor GTPase family. EF-G/EF-2 subfamily.

The protein localises to the cytoplasm. Catalyzes the GTP-dependent ribosomal translocation step during translation elongation. During this step, the ribosome changes from the pre-translocational (PRE) to the post-translocational (POST) state as the newly formed A-site-bound peptidyl-tRNA and P-site-bound deacylated tRNA move to the P and E sites, respectively. Catalyzes the coordinated movement of the two tRNA molecules, the mRNA and conformational changes in the ribosome. This chain is Elongation factor G, found in Thermoanaerobacter pseudethanolicus (strain ATCC 33223 / 39E) (Clostridium thermohydrosulfuricum).